A 516-amino-acid polypeptide reads, in one-letter code: RxLR effector protein PITG_15127 (516 aa).

A signal peptide spans 1–22 (MRLYSGAILCTIATLLISVSTA). The RxLR-dEER signature appears at 48-63 (RFLRVSTQNTENGENR).

Belongs to the RxLR effector family.

It localises to the secreted. The protein resides in the host cell membrane. Its subcellular location is the host nucleus. The protein localises to the host cytoplasm. In terms of biological role, effector that enhances P.infestans colonization of Nicotiana benthamiana leaves. This Phytophthora infestans (strain T30-4) (Potato late blight agent) protein is RxLR effector protein PITG_15127.